The sequence spans 128 residues: Glycine cleavage system H protein (128 aa).

A Lipoyl-binding domain is found at 24–106; that stretch reads VATVGITAFA…YNNGWLLKIK (83 aa). An N6-lipoyllysine modification is found at Lys65.

Belongs to the GcvH family. As to quaternary structure, the glycine cleavage system is composed of four proteins: P, T, L and H. (R)-lipoate is required as a cofactor.

The glycine cleavage system catalyzes the degradation of glycine. The H protein shuttles the methylamine group of glycine from the P protein to the T protein. This Acaryochloris marina (strain MBIC 11017) protein is Glycine cleavage system H protein.